We begin with the raw amino-acid sequence, 330 residues long: Free fatty acid receptor 2 (330 aa).

Over 1–8 (MTPDWHSS) the chain is Extracellular. Residues 9-29 (LILTAYILIFLTGLPANLLAL) traverse the membrane as a helical segment. Over 30–43 (RAFMGRVRQPQPAP) the chain is Cytoplasmic. A helical transmembrane segment spans residues 44–64 (VHILLLNLTLADLLLLLLLPF). Topologically, residues 65 to 79 (RIVEAASNFRWYLPK) are extracellular. Residues 80 to 100 (IVCALTGFGFYSSIYCSTWLL) traverse the membrane as a helical segment. The Cytoplasmic segment spans residues 101–126 (AGISMERYLGVAFPVQYKLSRRPLYG). Residues 127–147 (VIAALVAWIMSFGHCTIVIIV) form a helical membrane-spanning segment. At 148–184 (QYLNSTEQVGTENQITCYENFTQEQLDVVLPVRLELC) the chain is on the extracellular side. N-linked (GlcNAc...) asparagine glycans are attached at residues Asn-151 and Asn-167. Residues 185 to 205 (LVLFFVPMAVTIFCYWRFVWI) form a helical membrane-spanning segment. Residues 206–219 (MLTQPHVGAQRRRR) lie on the Cytoplasmic side of the membrane. Residues 220–240 (AVGLAVVTLLNFLVCFGPYNM) form a helical membrane-spanning segment. The Extracellular segment spans residues 241–255 (SHLVGFYLRQSPSWR). The chain crosses the membrane as a helical span at residues 256–276 (VEAVVFSSLNASLDPLLFYFS). Topologically, residues 277–330 (SSVVRRAFGKGLLLIRNPASSMLGRGAKETVEGTKMDRGGSQAEGVQSSEFVTE) are cytoplasmic. A disordered region spans residues 306–330 (TVEGTKMDRGGSQAEGVQSSEFVTE). A compositionally biased stretch (polar residues) spans 320–330 (EGVQSSEFVTE).

Belongs to the G-protein coupled receptor 1 family. Interacts with FCN1 (via Fibrinogen C-terminal domain). As to expression, highly expressed in hematopoietic tissues, such as spleen and bone marrow, with highest levels in a subset of immune cells, including monocytes or neutrophils. Expressed in adipose tissues with high expression in differentiating adipocytes. Expressed by intestinal endocrine cells.

It is found in the cell membrane. In terms of biological role, g protein-coupled receptor that is activated by a major product of dietary fiber digestion, the short chain fatty acids (SCFAs), and that plays a role in the regulation of whole-body energy homeostasis and in intestinal immunity. In omnivorous mammals, the short chain fatty acids acetate, propionate and butyrate are produced primarily by the gut microbiome that metabolizes dietary fibers. SCFAs serve as a source of energy but also act as signaling molecules. That G protein-coupled receptor is probably coupled to the pertussis toxin-sensitive, G(i/o)-alpha family of G proteins but also to the Gq family. Its activation results in the formation of inositol 1,4,5-trisphosphate, the mobilization of intracellular calcium, the phosphorylation of the MAPK3/ERK1 and MAPK1/ERK2 kinases and the inhibition of intracellular cAMP accumulation. May play a role in glucose homeostasis by regulating the secretion of GLP-1, in response to short-chain fatty acids accumulating in the intestine. May also regulate the production of LEP/Leptin, a hormone acting on the central nervous system to inhibit food intake. Finally, may also regulate whole-body energy homeostasis through adipogenesis regulating both differentiation and lipid storage of adipocytes. In parallel to its role in energy homeostasis, may also mediate the activation of the inflammatory and immune responses by SCFA in the intestine, regulating the rapid production of chemokines and cytokines. May also play a role in the resolution of the inflammatory response and control chemotaxis in neutrophils. In addition to SCFAs, may also be activated by the extracellular lectin FCN1 in a process leading to activation of monocytes and inducing the secretion of interleukin-8/IL-8 in response to the presence of microbes. This chain is Free fatty acid receptor 2 (Ffar2), found in Mus musculus (Mouse).